The following is a 267-amino-acid chain: PHD finger protein ALFIN-LIKE 7 (267 aa).

Positions 162–207 (TKVSNGSSKSNKSNPKPSKQSNSNSKPAKPPQPKDEEDSGPEGAED) are disordered. Positions 165–188 (SNGSSKSNKSNPKPSKQSNSNSKP) are enriched in low complexity. Residues 196–207 (DEEDSGPEGAED) are compositionally biased toward acidic residues. A PHD-type zinc finger spans residues 211–263 (AYMCGACGETYANGEFWICCDVCEKWFHGKCVRITPAKAEHIKQYKCPGCSSK).

This sequence belongs to the Alfin family. Interacts with H3K4me3 and to a lesser extent with H3K4me2.

It localises to the nucleus. Functionally, histone-binding component that specifically recognizes H3 tails trimethylated on 'Lys-4' (H3K4me3), which mark transcription start sites of virtually all active genes. This is PHD finger protein ALFIN-LIKE 7 from Oryza sativa subsp. indica (Rice).